Reading from the N-terminus, the 693-residue chain is Phenoloxidase subunit 2 (693 aa).

Residues 1 to 51 (MADVFESLELLFDRPNEPLITPKGENNSVFQLTEQFLTEDYANNGIELNNR) constitute a propeptide that is removed on maturation. Residues asparagine 26 and asparagine 64 are each glycosylated (N-linked (GlcNAc...) asparagine). Cu cation contacts are provided by histidine 213, histidine 217, and histidine 243. Glutamate 351 serves as the catalytic Proton acceptor. Cu cation is bound by residues histidine 366, histidine 370, and histidine 406. Asparagine 462 and asparagine 494 each carry an N-linked (GlcNAc...) asparagine glycan. Intrachain disulfides connect cysteine 583–cysteine 627 and cysteine 585–cysteine 634. Asparagine 680 carries N-linked (GlcNAc...) asparagine glycosylation.

Heterodimer. Cu(2+) serves as cofactor. In terms of processing, the N-terminus is blocked. As to expression, synthesized by hemocytes and released into the hemolymph plasma.

It is found in the secreted. It carries out the reaction 2 L-dopa + O2 = 2 L-dopaquinone + 2 H2O. The enzyme catalyses L-tyrosine + O2 = L-dopaquinone + H2O. Functionally, this is a copper-containing oxidase that functions in the formation of pigments such as melanins and other polyphenolic compounds. Catalyzes the rate-limiting conversions of tyrosine to DOPA, DOPA to DOPA-quinone and possibly 5,6 dihydroxyindole to indole-5'6 quinone. The sequence is that of Phenoloxidase subunit 2 from Bombyx mori (Silk moth).